We begin with the raw amino-acid sequence, 247 residues long: Probable transcriptional regulatory protein plu2109 (247 aa).

This sequence belongs to the TACO1 family.

The protein resides in the cytoplasm. This is Probable transcriptional regulatory protein plu2109 from Photorhabdus laumondii subsp. laumondii (strain DSM 15139 / CIP 105565 / TT01) (Photorhabdus luminescens subsp. laumondii).